The chain runs to 29 residues: Brevinin-2Ee (29 aa).

The cysteines at positions 23 and 29 are disulfide-linked.

It belongs to the frog skin active peptide (FSAP) family. Brevinin subfamily. As to expression, expressed by the skin glands.

It localises to the secreted. Its function is as follows. Shows antibacterial activity against representative Gram-negative and Gram-positive bacterial species, and hemolytic activity. This Pelophylax lessonae (Pool frog) protein is Brevinin-2Ee.